We begin with the raw amino-acid sequence, 179 residues long: Large ribosomal subunit protein uL6 (179 aa).

Belongs to the universal ribosomal protein uL6 family. As to quaternary structure, part of the 50S ribosomal subunit.

In terms of biological role, this protein binds to the 23S rRNA, and is important in its secondary structure. It is located near the subunit interface in the base of the L7/L12 stalk, and near the tRNA binding site of the peptidyltransferase center. This Leptospira interrogans serogroup Icterohaemorrhagiae serovar copenhageni (strain Fiocruz L1-130) protein is Large ribosomal subunit protein uL6.